The sequence spans 411 residues: uncharacterized protein (411 aa).

This sequence belongs to the peptidase M20 family.

This is an uncharacterized protein from Haemophilus influenzae (strain ATCC 51907 / DSM 11121 / KW20 / Rd).